Reading from the N-terminus, the 351-residue chain is S-adenosylmethionine:tRNA ribosyltransferase-isomerase (351 aa).

It belongs to the QueA family. As to quaternary structure, monomer.

It localises to the cytoplasm. The catalysed reaction is 7-aminomethyl-7-carbaguanosine(34) in tRNA + S-adenosyl-L-methionine = epoxyqueuosine(34) in tRNA + adenine + L-methionine + 2 H(+). Its pathway is tRNA modification; tRNA-queuosine biosynthesis. Functionally, transfers and isomerizes the ribose moiety from AdoMet to the 7-aminomethyl group of 7-deazaguanine (preQ1-tRNA) to give epoxyqueuosine (oQ-tRNA). This Sphingopyxis alaskensis (strain DSM 13593 / LMG 18877 / RB2256) (Sphingomonas alaskensis) protein is S-adenosylmethionine:tRNA ribosyltransferase-isomerase.